The sequence spans 783 residues: Lon protease (783 aa).

Residues 11 to 203 (IPVLPLRDVV…FLMGQMESEI (193 aa)) enclose the Lon N-terminal domain. 355–362 (GPPGVGKT) contributes to the ATP binding site. The Lon proteolytic domain maps to 591–772 (SNRIGQVTGL…DEVLKVALER (182 aa)). Residues S678 and K721 contribute to the active site.

The protein belongs to the peptidase S16 family. In terms of assembly, homohexamer. Organized in a ring with a central cavity.

The protein localises to the cytoplasm. The enzyme catalyses Hydrolysis of proteins in presence of ATP.. Its function is as follows. ATP-dependent serine protease that mediates the selective degradation of mutant and abnormal proteins as well as certain short-lived regulatory proteins. Required for cellular homeostasis and for survival from DNA damage and developmental changes induced by stress. Degrades polypeptides processively to yield small peptide fragments that are 5 to 10 amino acids long. Binds to DNA in a double-stranded, site-specific manner. Regulates swarmer cell differentiation of V.parahaemolyticus. The sequence is that of Lon protease from Vibrio parahaemolyticus serotype O3:K6 (strain RIMD 2210633).